Here is a 246-residue protein sequence, read N- to C-terminus: Caffeoyl-CoA O-methyltransferase 1 (246 aa).

A substrate-binding site is contributed by Lys-21. S-adenosyl-L-methionine is bound by residues Thr-63, Glu-85, 87–88, Ser-93, Asp-111, and Ala-140; that span reads GV. Asp-162 contributes to the substrate binding site. Asp-162 contacts a divalent metal cation. Position 164 (Asp-164) interacts with S-adenosyl-L-methionine. The a divalent metal cation site is built by Asp-188 and Asn-189. Residue Asn-193 coordinates substrate.

This sequence belongs to the class I-like SAM-binding methyltransferase superfamily. Cation-dependent O-methyltransferase family. CCoAMT subfamily. It depends on a divalent metal cation as a cofactor.

The enzyme catalyses (E)-caffeoyl-CoA + S-adenosyl-L-methionine = (E)-feruloyl-CoA + S-adenosyl-L-homocysteine + H(+). It participates in aromatic compound metabolism; phenylpropanoid biosynthesis. Its function is as follows. Methylates caffeoyl-CoA to feruloyl-CoA and 5-hydroxyferuloyl-CoA to sinapoyl-CoA. Plays a role in the synthesis of feruloylated polysaccharides. Involved in the reinforcement of the plant cell wall. Also involved in the responding to wounding or pathogen challenge by the increased formation of cell wall-bound ferulic acid polymers. The sequence is that of Caffeoyl-CoA O-methyltransferase 1 (CCOMT) from Eucalyptus globulus (Tasmanian blue gum).